Here is an 805-residue protein sequence, read N- to C-terminus: Probable phosphoketolase (805 aa).

Belongs to the XFP family. The cofactor is thiamine diphosphate.

The chain is Probable phosphoketolase from Synechocystis sp. (strain ATCC 27184 / PCC 6803 / Kazusa).